Consider the following 757-residue polypeptide: E3 ubiquitin-protein ligase RNF12-B (757 aa).

The span at 1–10 (MESADSTGKG) shows a compositional bias: polar residues. Disordered regions lie at residues 1-29 (MESADSTGKGSTEQSESQRQSQMDRLDRE), 68-519 (LQQI…TYES), and 619-652 (EPAEPVAPVESDEGSNVATSATRREGRNSRGGVT). Positions 11–21 (STEQSESQRQS) are enriched in low complexity. 2 stretches are compositionally biased toward polar residues: residues 110–138 (SVRQTGNTTRSGQRGNQSWRAVSRTNPNS) and 147–163 (INVNRTSGTASMPSLDQ). 21 tandem repeats follow at residues 197–202 (PESVDE), 203–208 (PVSVAE), 209–214 (PVSVAE), 215–220 (PVSVAE), 221–226 (PESVAE), 227–232 (PESVAA), 237–242 (PESVPE), 243–248 (PESVPE), 249–254 (PESVPE), 255–260 (PESVPE), 261–266 (PESVPE), 267–272 (PESVPE), 273–278 (PESVPE), 279–284 (PESVPE), 285–290 (PESVPE), 291–296 (PESVPE), 297–302 (PESVPE), 303–308 (PESVPE), 309–314 (PESIAE), 315–320 (PESVPV), and 321–326 (PESVPV). The 21 X 6 AA approximate repeats of P-[EV]-S-V-[PA]-[EV] stretch occupies residues 197-326 (PESVDEPVSV…SVPVPESVPV (130 aa)). A compositionally biased stretch (low complexity) spans 202 to 237 (EPVSVAEPVSVAEPVSVAEPESVAEPESVAASVPVP). Residues 245 to 313 (SVPEPESVPE…ESVPEPESIA (69 aa)) are compositionally biased toward acidic residues. The segment covering 314–327 (EPESVPVPESVPVA) has biased composition (low complexity). Residues 352 to 367 (RSPDQRRTRARTDRSR) show a composition bias toward basic and acidic residues. The span at 383–392 (HSSSQTVDAS) shows a compositional bias: polar residues. Residues 408-424 (SSQVHSSSSNETEGSSR) show a composition bias toward low complexity. The span at 428–452 (HITARQQALGTEGQSQSTVHLSNPE) shows a compositional bias: polar residues. Over residues 453-466 (SRSSSQTPQTDSPS) the composition is skewed to low complexity. Residues 467–476 (NAETTGTGQR) show a composition bias toward polar residues. Basic and acidic residues predominate over residues 490-500 (RPGDYRQRDSI). A compositionally biased stretch (polar residues) spans 501–517 (ANRTRSRSQTPNNTVTY). Residues 703–744 (CSVCITEYTEGNKLRKLPCSHEYHIHCIDRWLSENSTCPICR) form an RING-type; atypical zinc finger. Positions 754–757 (ESIV) match the PDZ-binding motif.

The protein belongs to the RNF12 family. Forms homodimers through the C-terminal region. The N-terminus interacts with the homeobox of LIM/homeobox factor lhx1/lim1, with lhx3/lim3 and lhx5/lim5, and with the N-terminus of ldb1. As to expression, shows overlapping expression with lhx1/lim1 and ldb1 in the gastrula mesoderm, and expression overlaps with ldb1 throughout early embryogenesis. After gastrulation, expression is gradually restricted to tissues originated from the ectoderm, the neuroectoderm, neural crest and epidermis, and subsequently to the neural tube as well as the head and tailbud region.

The protein localises to the nucleus. The enzyme catalyses S-ubiquitinyl-[E2 ubiquitin-conjugating enzyme]-L-cysteine + [acceptor protein]-L-lysine = [E2 ubiquitin-conjugating enzyme]-L-cysteine + N(6)-ubiquitinyl-[acceptor protein]-L-lysine.. It participates in protein modification; protein ubiquitination. Functionally, acts as an E3 ubiquitin-protein ligase specific for ldb1, mediating ubiquitination and proteasome-dependent degradation of excess ldb1 in a RING-dependent manner. Does not degrade ldb1 bound to lhx1/lim1, nor lim1 itself and thus contributes to the establishment of proper ldb1-lhx1/lim1 stoichiometry and the formation of a ldb1-lhx1/lim1 complex. Interferes with Spemann organizer function and suppresses secondary axis formation induced by ldb1 and lhx1/lim1. This is E3 ubiquitin-protein ligase RNF12-B (rnf12-b) from Xenopus laevis (African clawed frog).